The chain runs to 404 residues: Probable tRNA sulfurtransferase (404 aa).

Residues 60-165 (HEVAESLKEI…DEAAYISYED (106 aa)) enclose the THUMP domain. ATP-binding positions include 183 to 184 (ML), 208 to 209 (HF), arginine 265, glycine 287, and glutamine 296.

This sequence belongs to the ThiI family.

It localises to the cytoplasm. The catalysed reaction is [ThiI sulfur-carrier protein]-S-sulfanyl-L-cysteine + a uridine in tRNA + 2 reduced [2Fe-2S]-[ferredoxin] + ATP + H(+) = [ThiI sulfur-carrier protein]-L-cysteine + a 4-thiouridine in tRNA + 2 oxidized [2Fe-2S]-[ferredoxin] + AMP + diphosphate. The enzyme catalyses [ThiS sulfur-carrier protein]-C-terminal Gly-Gly-AMP + S-sulfanyl-L-cysteinyl-[cysteine desulfurase] + AH2 = [ThiS sulfur-carrier protein]-C-terminal-Gly-aminoethanethioate + L-cysteinyl-[cysteine desulfurase] + A + AMP + 2 H(+). The protein operates within cofactor biosynthesis; thiamine diphosphate biosynthesis. Functionally, catalyzes the ATP-dependent transfer of a sulfur to tRNA to produce 4-thiouridine in position 8 of tRNAs, which functions as a near-UV photosensor. Also catalyzes the transfer of sulfur to the sulfur carrier protein ThiS, forming ThiS-thiocarboxylate. This is a step in the synthesis of thiazole, in the thiamine biosynthesis pathway. The sulfur is donated as persulfide by IscS. The chain is Probable tRNA sulfurtransferase from Streptococcus agalactiae serotype V (strain ATCC BAA-611 / 2603 V/R).